A 350-amino-acid chain; its full sequence is Protein RecA (350 aa).

Glycine 66–threonine 73 is a binding site for ATP.

The protein belongs to the RecA family.

Its subcellular location is the cytoplasm. In terms of biological role, can catalyze the hydrolysis of ATP in the presence of single-stranded DNA, the ATP-dependent uptake of single-stranded DNA by duplex DNA, and the ATP-dependent hybridization of homologous single-stranded DNAs. It interacts with LexA causing its activation and leading to its autocatalytic cleavage. The protein is Protein RecA of Dichelobacter nodosus (strain VCS1703A).